The primary structure comprises 389 residues: 3-oxo-Delta(4,5)-steroid 5-beta-reductase (389 aa).

NADP(+)-binding positions include 35–37, 63–64, 81–82, Thr105, and Gln143; these read TGI, RR, and DI. Active-site residues include Lys147 and Tyr179. NADP(+) is bound by residues Tyr179, Ile206, and 213–215; that span reads SMM.

The protein belongs to the short-chain dehydrogenases/reductases (SDR) family. Highly divergent. As to quaternary structure, homodimer.

It carries out the reaction 5beta-cholestan-3-one + NADP(+) = cholest-4-en-3-one + NADPH + H(+). The enzyme catalyses 4,5beta-dihydrocortisone + NADP(+) = cortisone + NADPH + H(+). In terms of biological role, involved in cardenolide biosynthesis. Catalyzes the stereospecific conversion of progesterone to 5-beta-pregnane-3,20-dione. Can use progesterone, testosterone, 4-androstene-3,17-dione, cortisol and cortisone as substrates, but not pregnenolone, 21-OH-pregnenolone or isoprogesterone. NADPH could not be replaced by NADH. In Digitalis lanata (Grecian foxglove), this protein is 3-oxo-Delta(4,5)-steroid 5-beta-reductase.